The chain runs to 276 residues: MDPCSVGVQLRTTHDCHKTFYTRHTGFKTLKELSSNDMLLLQLRTGMTLSGNNTICLHHVKIYIERFEELQKSCCDPFNIHKKLAKKNLHVIDLDDATFLSAKFGRQLVPGWKLCPKCTQIINGSVDVDSDDRQRRKPESDGRTAKALRSLQFTNPGKQTEFAPESGKREKRKLTKNASASSDRQIIPAKSKVYDSQGLLIFSGMDLCDCLDEDCLGCFYACPTCGSTKCGAECRCDRKWLYEQIEIEGGEIIHNKHAGKAYGLLSPCHPYDILQK.

Positions 159–183 (QTEFAPESGKREKRKLTKNASASSD) are disordered. Residue lysine 176 forms a Glycyl lysine isopeptide (Lys-Gly) (interchain with G-Cter in SUMO2) linkage. Serine 182 and serine 266 each carry phosphoserine.

In terms of assembly, interacts with ARL14 and MYO1E.

It localises to the cytoplasm. Its function is as follows. Through its interaction with ARL14 and MYO1E, may connect MHC class II-containing cytoplasmic vesicles to the actin network and hence controls the movement of these vesicles along the actin cytoskeleton in dendritic cells. This Rattus norvegicus (Rat) protein is ARL14 effector protein (Arl14ep).